A 415-amino-acid polypeptide reads, in one-letter code: MTELIKKGSAAKEASQFLAQASTKQKNAALLNLSNDLLAHTASLLQENNKDIIRAREKGTPETMIDRLRLTEERIKEISDAVKQVVALKDPIGEVTNMWKNEAELTIGKTRVPLGVIGIIYESRPNVTVDASVLCFKTGNAVILRGGSDAIDSNKALMSVIQDSLAASGFPRSSVQLIEDTSRETARDMMRLNRFLDVLIPRGGAKLIQTVLENATVPVIETGTGNCHIYVDKAAEKQMAIDILVNAKCSRPSVCNAAETLLIHRDVAEAFLPEMETALKEYNVELRADERAREILKDSKAATESDWEDEFLDFILAIKVVDSVDEAINHINKYGTKHSEAIISNDYATGQAFHQKVDAAAVYINASTRFTDGFAMGFGAEIGISTQKLHARGPMGLTELTSTKYIIFGDGQIRN.

This sequence belongs to the gamma-glutamyl phosphate reductase family.

The protein localises to the cytoplasm. The enzyme catalyses L-glutamate 5-semialdehyde + phosphate + NADP(+) = L-glutamyl 5-phosphate + NADPH + H(+). It functions in the pathway amino-acid biosynthesis; L-proline biosynthesis; L-glutamate 5-semialdehyde from L-glutamate: step 2/2. Functionally, catalyzes the NADPH-dependent reduction of L-glutamate 5-phosphate into L-glutamate 5-semialdehyde and phosphate. The product spontaneously undergoes cyclization to form 1-pyrroline-5-carboxylate. The protein is Gamma-glutamyl phosphate reductase of Listeria innocua serovar 6a (strain ATCC BAA-680 / CLIP 11262).